Here is a 391-residue protein sequence, read N- to C-terminus: Lipoyl synthase, mitochondrial (391 aa).

The N-terminal 44 residues, 1 to 44, are a transit peptide targeting the mitochondrion; it reads MVHPHLSRTKRTFFSHSSQMISRHIRKTNSLAFVRALSASETAV. [4Fe-4S] cluster-binding residues include Cys120, Cys125, Cys131, Cys150, Cys154, Cys157, and Ser365. Positions 135–354 constitute a Radical SAM core domain; that stretch reads KKSEATATIM…KEVALEMGFL (220 aa).

It belongs to the radical SAM superfamily. Lipoyl synthase family. The cofactor is [4Fe-4S] cluster.

Its subcellular location is the mitochondrion. The enzyme catalyses [[Fe-S] cluster scaffold protein carrying a second [4Fe-4S](2+) cluster] + N(6)-octanoyl-L-lysyl-[protein] + 2 oxidized [2Fe-2S]-[ferredoxin] + 2 S-adenosyl-L-methionine + 4 H(+) = [[Fe-S] cluster scaffold protein] + N(6)-[(R)-dihydrolipoyl]-L-lysyl-[protein] + 4 Fe(3+) + 2 hydrogen sulfide + 2 5'-deoxyadenosine + 2 L-methionine + 2 reduced [2Fe-2S]-[ferredoxin]. It functions in the pathway protein modification; protein lipoylation via endogenous pathway; protein N(6)-(lipoyl)lysine from octanoyl-[acyl-carrier-protein]: step 2/2. In terms of biological role, catalyzes the radical-mediated insertion of two sulfur atoms into the C-6 and C-8 positions of the octanoyl moiety bound to the lipoyl domains of lipoate-dependent enzymes, thereby converting the octanoylated domains into lipoylated derivatives. The chain is Lipoyl synthase, mitochondrial from Clavispora lusitaniae (strain ATCC 42720) (Yeast).